Consider the following 892-residue polypeptide: Dipeptidyl peptidase 8 (892 aa).

Residues Ser-749, Asp-827, and His-859 each act as charge relay system in the active site.

The protein belongs to the peptidase S9B family. DPPIV subfamily. In terms of assembly, homodimer. Forms a ternary complex with NLRP1, composed of a DPP8 homodimer, one full-length NLRP1 protein, and one cleaved C-terminus of NLRP1 (NACHT, LRR and PYD domains-containing protein 1, C-terminus). Forms a ternary complex with CARD8, composed of a DPP8 homodimer, one full-length NLRP1 protein, and one cleaved C-terminus of CARD8 (Caspase recruitment domain-containing protein 8, C-terminus). In the ternary complex, only one subunit of the DPP8 homodimer is bound to NLRP1 or CARD8.

It localises to the cytoplasm. The enzyme catalyses Release of an N-terminal dipeptide, Xaa-Yaa-|-Zaa-, from a polypeptide, preferentially when Yaa is Pro, provided Zaa is neither Pro nor hydroxyproline.. Inhibited by zinc. Inhibited by the serine proteinase inhibitor 4-(2-aminoethyl)benzenesulphonyl fluoride (AEBSF), and by di-isopropylfluorophosphate. Specifically inhibited by isoindoline derivatives. Inhibited by Val-boroPro (Talabostat, PT-100), a non-selective inhibitor, which triggers pyroptosis in monocytes and macrophages. Its function is as follows. Dipeptidyl peptidase that cleaves off N-terminal dipeptides from proteins having a Pro or Ala residue at position 2. Acts as a key inhibitor of caspase-1-dependent monocyte and macrophage pyroptosis in resting cells by preventing activation of NLRP1 and CARD8. Sequesters the cleaved C-terminal part of NLRP1 and CARD8, which respectively constitute the active part of the NLRP1 and CARD8 inflammasomes, in a ternary complex, thereby preventing their oligomerization and activation. The dipeptidyl peptidase activity is required to suppress NLRP1 and CARD8; however, neither NLRP1 nor CARD8 are bona fide substrates of DPP8, suggesting the existence of substrate(s) required for NLRP1 and CARD8 inhibition. In Mus musculus (Mouse), this protein is Dipeptidyl peptidase 8.